We begin with the raw amino-acid sequence, 238 residues long: Demethylmenaquinone methyltransferase (238 aa).

S-adenosyl-L-methionine-binding positions include Thr-65, Asp-85, and Asp-109–Ala-110.

This sequence belongs to the class I-like SAM-binding methyltransferase superfamily. MenG/UbiE family.

It carries out the reaction a 2-demethylmenaquinol + S-adenosyl-L-methionine = a menaquinol + S-adenosyl-L-homocysteine + H(+). It functions in the pathway quinol/quinone metabolism; menaquinone biosynthesis; menaquinol from 1,4-dihydroxy-2-naphthoate: step 2/2. In terms of biological role, methyltransferase required for the conversion of demethylmenaquinol (DMKH2) to menaquinol (MKH2). The polypeptide is Demethylmenaquinone methyltransferase (Roseiflexus castenholzii (strain DSM 13941 / HLO8)).